Reading from the N-terminus, the 761-residue chain is Xaa-Pro dipeptidyl-peptidase (761 aa).

Catalysis depends on charge relay system residues S347, D467, and H497.

The protein belongs to the peptidase S15 family. In terms of assembly, homodimer.

Its subcellular location is the cytoplasm. The enzyme catalyses Hydrolyzes Xaa-Pro-|- bonds to release unblocked, N-terminal dipeptides from substrates including Ala-Pro-|-p-nitroanilide and (sequentially) Tyr-Pro-|-Phe-Pro-|-Gly-Pro-|-Ile.. In terms of biological role, removes N-terminal dipeptides sequentially from polypeptides having unsubstituted N-termini provided that the penultimate residue is proline. This Streptococcus agalactiae serotype V (strain ATCC BAA-611 / 2603 V/R) protein is Xaa-Pro dipeptidyl-peptidase.